The primary structure comprises 517 residues: Bifunctional purine biosynthesis protein PurH (517 aa).

An MGS-like domain is found at 1–145; it reads MSPLALVSVS…KNHADVAVLV (145 aa).

Belongs to the PurH family.

The catalysed reaction is (6R)-10-formyltetrahydrofolate + 5-amino-1-(5-phospho-beta-D-ribosyl)imidazole-4-carboxamide = 5-formamido-1-(5-phospho-D-ribosyl)imidazole-4-carboxamide + (6S)-5,6,7,8-tetrahydrofolate. The enzyme catalyses IMP + H2O = 5-formamido-1-(5-phospho-D-ribosyl)imidazole-4-carboxamide. Its pathway is purine metabolism; IMP biosynthesis via de novo pathway; 5-formamido-1-(5-phospho-D-ribosyl)imidazole-4-carboxamide from 5-amino-1-(5-phospho-D-ribosyl)imidazole-4-carboxamide (10-formyl THF route): step 1/1. It functions in the pathway purine metabolism; IMP biosynthesis via de novo pathway; IMP from 5-formamido-1-(5-phospho-D-ribosyl)imidazole-4-carboxamide: step 1/1. This Prochlorococcus marinus (strain MIT 9515) protein is Bifunctional purine biosynthesis protein PurH.